Here is a 405-residue protein sequence, read N- to C-terminus: Adenosylhomocysteinase (405 aa).

Positions 113 and 138 each coordinate substrate. Residue 139 to 141 (TTT) coordinates NAD(+). Substrate is bound by residues Lys-168 and Asp-172. NAD(+) is bound by residues Asn-173, 202 to 207 (GYGWCG), Glu-225, Asn-260, 281 to 283 (AGH), and Asn-327.

Belongs to the adenosylhomocysteinase family. It depends on NAD(+) as a cofactor.

It localises to the cytoplasm. It catalyses the reaction S-adenosyl-L-homocysteine + H2O = L-homocysteine + adenosine. It participates in amino-acid biosynthesis; L-homocysteine biosynthesis; L-homocysteine from S-adenosyl-L-homocysteine: step 1/1. Its function is as follows. May play a key role in the regulation of the intracellular concentration of adenosylhomocysteine. The sequence is that of Adenosylhomocysteinase from Archaeoglobus fulgidus (strain ATCC 49558 / DSM 4304 / JCM 9628 / NBRC 100126 / VC-16).